Reading from the N-terminus, the 257-residue chain is Pimeloyl-[acyl-carrier protein] methyl ester esterase (257 aa).

The region spanning 15–241 (HLVLLHGWGL…KAAHAPFVSH (227 aa)) is the AB hydrolase-1 domain. Residues tryptophan 22, 82–83 (SL), and 143–147 (FLALQ) contribute to the substrate site. Serine 82 serves as the catalytic Nucleophile. Catalysis depends on residues aspartate 207 and histidine 235. Histidine 235 contributes to the substrate binding site.

Belongs to the AB hydrolase superfamily. Carboxylesterase BioH family. In terms of assembly, monomer.

It localises to the cytoplasm. It catalyses the reaction 6-carboxyhexanoyl-[ACP] methyl ester + H2O = 6-carboxyhexanoyl-[ACP] + methanol + H(+). It participates in cofactor biosynthesis; biotin biosynthesis. The physiological role of BioH is to remove the methyl group introduced by BioC when the pimeloyl moiety is complete. It allows to synthesize pimeloyl-ACP via the fatty acid synthetic pathway through the hydrolysis of the ester bonds of pimeloyl-ACP esters. This is Pimeloyl-[acyl-carrier protein] methyl ester esterase from Klebsiella pneumoniae (strain 342).